The primary structure comprises 591 residues: BRCA1-associated protein (591 aa).

Position 52 is a phosphoserine (Ser52). Residues 82-93 are compositionally biased toward basic and acidic residues; that stretch reads DEVRDTVEEKKP. Positions 82–124 are disordered; sequence DEVRDTVEEKKPSAAPVSAQRSREQSESVNTAPESPSKQLPDQ. The span at 108–124 shows a compositional bias: polar residues; it reads ESVNTAPESPSKQLPDQ. Phosphoserine is present on residues Ser116 and Ser118. The RING-type zinc finger occupies 263 to 303; sequence CTVCLERMDESVNGILTTLCNHSFHSQCLQRWDDTTCPVCR. The UBP-type; degenerate zinc-finger motif lies at 300–392; that stretch reads PVCRYCQTPE…GKIVQYECEG (93 aa). 8 residues coordinate Zn(2+): Cys316, Cys319, Cys328, Cys331, Cys336, His343, His347, and His353. The stretch at 430–536 forms a coiled coil; that stretch reads EKDTAEEINN…EIQEQLRDVM (107 aa). Residues 563 to 591 are disordered; the sequence is IAMASAPNPPSSGAGGKLQSRKGRSKRGK. Over residues 581-591 the composition is skewed to basic residues; the sequence is QSRKGRSKRGK.

In terms of assembly, interacts with the nuclear localization signal of BRCA1 and with the N-terminal of KSR1. The C-terminal portion of BRCA1 interacts with DDB1. Isoform 2 is highly expressed in testis, lower levels in brain, heart, lung, stomach, colon, uterus, liver and kidney. Isoform 1 is only expressed in the testis. Isoform 2 is predominant over isoform 1 in both fetal and adult testis.

It is found in the cytoplasm. The enzyme catalyses S-ubiquitinyl-[E2 ubiquitin-conjugating enzyme]-L-cysteine + [acceptor protein]-L-lysine = [E2 ubiquitin-conjugating enzyme]-L-cysteine + N(6)-ubiquitinyl-[acceptor protein]-L-lysine.. Its pathway is protein modification; protein ubiquitination. In terms of biological role, negatively regulates MAP kinase activation by limiting the formation of Raf/MEK complexes probably by inactivation of the KSR1 scaffold protein. Also acts as a Ras responsive E3 ubiquitin ligase that, on activation of Ras, is modified by auto-polyubiquitination resulting in the release of inhibition of Raf/MEK complex formation. May also act as a cytoplasmic retention protein with a role in regulating nuclear transport. The sequence is that of BRCA1-associated protein from Mus musculus (Mouse).